The chain runs to 476 residues: Aspartyl/glutamyl-tRNA(Asn/Gln) amidotransferase subunit B (476 aa).

This sequence belongs to the GatB/GatE family. GatB subfamily. As to quaternary structure, heterotrimer of A, B and C subunits.

It carries out the reaction L-glutamyl-tRNA(Gln) + L-glutamine + ATP + H2O = L-glutaminyl-tRNA(Gln) + L-glutamate + ADP + phosphate + H(+). The catalysed reaction is L-aspartyl-tRNA(Asn) + L-glutamine + ATP + H2O = L-asparaginyl-tRNA(Asn) + L-glutamate + ADP + phosphate + 2 H(+). Its function is as follows. Allows the formation of correctly charged Asn-tRNA(Asn) or Gln-tRNA(Gln) through the transamidation of misacylated Asp-tRNA(Asn) or Glu-tRNA(Gln) in organisms which lack either or both of asparaginyl-tRNA or glutaminyl-tRNA synthetases. The reaction takes place in the presence of glutamine and ATP through an activated phospho-Asp-tRNA(Asn) or phospho-Glu-tRNA(Gln). This is Aspartyl/glutamyl-tRNA(Asn/Gln) amidotransferase subunit B from Clostridium botulinum (strain Alaska E43 / Type E3).